Reading from the N-terminus, the 688-residue chain is Elongation factor G (688 aa).

The 275-residue stretch at 8–282 (EKFRNFGIMA…GVVDYLPSPL (275 aa)) folds into the tr-type G domain. GTP is bound by residues 17–24 (AHIDAGKT), 81–85 (DTPGH), and 135–138 (NKMD).

It belongs to the TRAFAC class translation factor GTPase superfamily. Classic translation factor GTPase family. EF-G/EF-2 subfamily.

It localises to the cytoplasm. Catalyzes the GTP-dependent ribosomal translocation step during translation elongation. During this step, the ribosome changes from the pre-translocational (PRE) to the post-translocational (POST) state as the newly formed A-site-bound peptidyl-tRNA and P-site-bound deacylated tRNA move to the P and E sites, respectively. Catalyzes the coordinated movement of the two tRNA molecules, the mRNA and conformational changes in the ribosome. This Clostridium perfringens (strain 13 / Type A) protein is Elongation factor G.